The following is a 281-amino-acid chain: 3-hydroxybutyryl-CoA dehydrogenase (281 aa).

Belongs to the 3-hydroxyacyl-CoA dehydrogenase family.

The catalysed reaction is (3S)-3-hydroxybutanoyl-CoA + NADP(+) = acetoacetyl-CoA + NADPH + H(+). The protein operates within lipid metabolism; butanoate metabolism. This is 3-hydroxybutyryl-CoA dehydrogenase (hbd) from Clostridioides difficile (Peptoclostridium difficile).